A 328-amino-acid chain; its full sequence is Arabinose 5-phosphate isomerase KdsD (328 aa).

The region spanning 42–184 (CEKMFWCKGK…AVALLKARGF (143 aa)) is the SIS domain. Substrate is bound by residues 75-76 (GT), His82, His88, 114-123 (ALIPVLKRLH), 148-150 (KVA), Thr222, and Asp275. Residue His82 participates in Zn(2+) binding. The CBS 1 domain occupies 210-268 (MHTGDEIPHVKKTASLRDALLEVTRKNLGMTVICDDNMMIEGIFTDGDLRRVFDMGVDV). The region spanning 277–328 (MTPGGIRVRPGILAVEALNLMQSRHITSVMVADGDHLLGVLHMHDLLRAGVV) is the CBS 2 domain.

This sequence belongs to the SIS family. GutQ/KpsF subfamily. Homotetramer.

It carries out the reaction D-arabinose 5-phosphate = D-ribulose 5-phosphate. It participates in carbohydrate biosynthesis; 3-deoxy-D-manno-octulosonate biosynthesis; 3-deoxy-D-manno-octulosonate from D-ribulose 5-phosphate: step 1/3. The protein operates within bacterial outer membrane biogenesis; lipopolysaccharide biosynthesis. Completely inhibited by 10 uM of nickel, copper, cadmium and mercury ions. Inhibited by zinc with an IC(50) of 1-3 uM. Metal ion inhibition may be a mechanism to control activity in vivo. In terms of biological role, involved in the biosynthesis of 3-deoxy-D-manno-octulosonate (KDO), a unique 8-carbon sugar component of lipopolysaccharides (LPSs). KdsD is not essential in the KDO biosynthesis and can be substituted by GutQ. Catalyzes the reversible aldol-ketol isomerization between D-ribulose 5-phosphate (Ru5P) and D-arabinose 5-phosphate (A5P). This is Arabinose 5-phosphate isomerase KdsD (kdsD) from Escherichia coli (strain K12).